The following is a 1502-amino-acid chain: Clustered mitochondria protein homolog (1502 aa).

Disordered regions lie at residues 1 to 62 (MSES…EPLD), 571 to 615 (AQAE…NPMM), 755 to 799 (AEAE…EEDR), 1054 to 1085 (KDQEEEENKREENIKSKEKKKGSKAGAKGETV), 1381 to 1403 (ARERIGGGAASTSRPTGIRRLGG), and 1429 to 1502 (GQGG…GAKR). The segment covering 7-35 (AAAQNGQAEEQQLQQQLDEQQQLEEQQQL) has biased composition (low complexity). The span at 53–62 (KPKDSTEPLD) shows a compositional bias: basic and acidic residues. In terms of domain architecture, Clu spans 399-693 (EILRTQLAFL…RLAPVDVEWL (295 aa)). A compositionally biased stretch (acidic residues) spans 575 to 586 (TEAEAETADAVE). The segment covering 587–606 (GEQKKEDWVDVEKPTEKSGS) has biased composition (basic and acidic residues). Residues 781–792 (EEQSAAASAAAA) are compositionally biased toward low complexity. Residues 1054-1069 (KDQEEEENKREENIKS) show a composition bias toward basic and acidic residues. Residues 1429–1451 (GQGGNPSANAAAATAGQGEQANG) are compositionally biased toward low complexity. Residues 1462–1471 (RGTESLEELV) show a composition bias toward basic and acidic residues. The span at 1486-1502 (KRGKNALRGKRRTGAKR) shows a compositional bias: basic residues.

Belongs to the CLU family. In terms of assembly, may associate with the eukaryotic translation initiation factor 3 (eIF-3) complex.

It localises to the cytoplasm. MRNA-binding protein involved in proper cytoplasmic distribution of mitochondria. The polypeptide is Clustered mitochondria protein homolog (Cryptococcus neoformans var. neoformans serotype D (strain B-3501A) (Filobasidiella neoformans)).